A 178-amino-acid chain; its full sequence is Large ribosomal subunit protein uL6 (178 aa).

The protein belongs to the universal ribosomal protein uL6 family. As to quaternary structure, part of the 50S ribosomal subunit.

Its function is as follows. This protein binds to the 23S rRNA, and is important in its secondary structure. It is located near the subunit interface in the base of the L7/L12 stalk, and near the tRNA binding site of the peptidyltransferase center. This is Large ribosomal subunit protein uL6 from Wolinella succinogenes (strain ATCC 29543 / DSM 1740 / CCUG 13145 / JCM 31913 / LMG 7466 / NCTC 11488 / FDC 602W) (Vibrio succinogenes).